We begin with the raw amino-acid sequence, 330 residues long: GTPase Obg (330 aa).

One can recognise an Obg domain in the interval 1–159; it reads MQFIDQARIT…WPLQLELKLL (159 aa). Residues 160–328 enclose the OBG-type G domain; that stretch reads AEVGIIGLPN…LLERVWKELG (169 aa). ATP-binding positions include 166 to 173, 191 to 195, 213 to 216, 280 to 283, and 309 to 311; these read GLPNAGKS, FTTLV, DIPG, NKQE, and SAA. Residues S173 and T193 each coordinate Mg(2+).

It belongs to the TRAFAC class OBG-HflX-like GTPase superfamily. OBG GTPase family. As to quaternary structure, monomer. Requires Mg(2+) as cofactor.

The protein localises to the cytoplasm. In terms of biological role, an essential GTPase which binds GTP, GDP and possibly (p)ppGpp with moderate affinity, with high nucleotide exchange rates and a fairly low GTP hydrolysis rate. Plays a role in control of the cell cycle, stress response, ribosome biogenesis and in those bacteria that undergo differentiation, in morphogenesis control. This Parasynechococcus marenigrum (strain WH8102) protein is GTPase Obg.